The following is a 281-amino-acid chain: 4-diphosphocytidyl-2-C-methyl-D-erythritol kinase (281 aa).

Residue Lys-15 is part of the active site. ATP is bound at residue 98–108; that stretch reads PTGAGLGGGSS. Residue Asp-140 is part of the active site.

The protein belongs to the GHMP kinase family. IspE subfamily.

It carries out the reaction 4-CDP-2-C-methyl-D-erythritol + ATP = 4-CDP-2-C-methyl-D-erythritol 2-phosphate + ADP + H(+). Its pathway is isoprenoid biosynthesis; isopentenyl diphosphate biosynthesis via DXP pathway; isopentenyl diphosphate from 1-deoxy-D-xylulose 5-phosphate: step 3/6. Its function is as follows. Catalyzes the phosphorylation of the position 2 hydroxy group of 4-diphosphocytidyl-2C-methyl-D-erythritol. The sequence is that of 4-diphosphocytidyl-2-C-methyl-D-erythritol kinase from Neisseria gonorrhoeae (strain NCCP11945).